A 300-amino-acid polypeptide reads, in one-letter code: Protoheme IX farnesyltransferase (300 aa).

Helical transmembrane passes span 24-44, 46-66, 94-114, 118-138, 146-166, 172-192, 217-237, 239-259, and 278-298; these read VTQLAVFCAVIGMFLATPGMV, WHVLIGGTVGIWLLAGAAFAI, PQILIFSAVLGSVGAWTLYTF, LTMWLTIATFVGYAVIYTLLL, IVIGGASGAMPPALGWAAVTG, AWILVLIIFVWTPPHFWVLAL, LHILLYTVILFAVTLMPFISG, SGAVYLTSAVLLGAVFLAYAW, and IVYLSLLFAALLVDHYARPLL.

It belongs to the UbiA prenyltransferase family. Protoheme IX farnesyltransferase subfamily.

It is found in the cell inner membrane. The catalysed reaction is heme b + (2E,6E)-farnesyl diphosphate + H2O = Fe(II)-heme o + diphosphate. It functions in the pathway porphyrin-containing compound metabolism; heme O biosynthesis; heme O from protoheme: step 1/1. Its function is as follows. Converts heme B (protoheme IX) to heme O by substitution of the vinyl group on carbon 2 of heme B porphyrin ring with a hydroxyethyl farnesyl side group. This is Protoheme IX farnesyltransferase from Burkholderia lata (strain ATCC 17760 / DSM 23089 / LMG 22485 / NCIMB 9086 / R18194 / 383).